The primary structure comprises 266 residues: Succinate dehydrogenase [ubiquinone] iron-sulfur subunit, mitochondrial (266 aa).

The N-terminal 20 residues, 1–20 (MLNVLLRRKAFCLVTKKGMA), are a transit peptide targeting the mitochondrion. The 2Fe-2S ferredoxin-type domain occupies 36–127 (FKVYRWNPDE…QLKIYPLPHM (92 aa)). [2Fe-2S] cluster contacts are provided by Cys-87, Cys-92, Cys-95, and Cys-107. The 4Fe-4S ferredoxin-type domain maps to 169–199 (DRKKLDGLYECILCACCSTSCPSYWWNQEQY). Residues Cys-179, Cys-182, and Cys-185 each coordinate [4Fe-4S] cluster. Cys-189 lines the [3Fe-4S] cluster pocket. Trp-194 contributes to the a ubiquinone binding site. Residues Cys-236 and Cys-242 each coordinate [3Fe-4S] cluster. Cys-246 lines the [4Fe-4S] cluster pocket.

This sequence belongs to the succinate dehydrogenase/fumarate reductase iron-sulfur protein family. As to quaternary structure, component of complex II composed of four subunits: a flavoprotein (FP), an iron-sulfur protein (IP), and a cytochrome b composed of a large and a small subunit. Requires [2Fe-2S] cluster as cofactor. It depends on [3Fe-4S] cluster as a cofactor. The cofactor is [4Fe-4S] cluster.

Its subcellular location is the mitochondrion inner membrane. It carries out the reaction a quinone + succinate = fumarate + a quinol. It participates in carbohydrate metabolism; tricarboxylic acid cycle; fumarate from succinate (eukaryal route): step 1/1. Functionally, subunit of succinate dehydrogenase (SDH) that is involved in complex II of the mitochondrial electron transport chain and is responsible for transferring electrons from succinate to ubiquinone (coenzyme Q). SDH1 and SDH2 form the catalytic dimer. Electrons flow from succinate to the FAD bound to SDH1, and sequentially through the iron-sulfur clusters bound to SDH2 and enter the membrane dimer formed by SDH3 and SDH4. In Saccharomyces cerevisiae (strain ATCC 204508 / S288c) (Baker's yeast), this protein is Succinate dehydrogenase [ubiquinone] iron-sulfur subunit, mitochondrial (SDH2).